A 1072-amino-acid polypeptide reads, in one-letter code: 5'-3' exoribonuclease 2 (1072 aa).

Residues 118 to 144 (RRFRAAREAMEKEEDKQKFVELLKKQN) are a coiled coil. The CCHC-type zinc finger occupies 269-286 (RLCKICGQKGHDAMNCKG). The segment covering 414–435 (KETEDRREAGFKRRKLADEARQ) has biased composition (basic and acidic residues). Disordered regions lie at residues 414-459 (KETE…GFSF), 509-577 (QGTS…AEPT), 865-911 (ASRS…GGGG), and 943-1072 (GGGY…RGYR). Residues 518-543 (AESTETPAETAAAAPATEEQAAPPAA) are compositionally biased toward low complexity. A compositionally biased stretch (gly residues) spans 892 to 911 (GPGGGQQGGRGRGGYQGGGG). Positions 955–967 (GPPPGWQPPPPPG) are enriched in pro residues. Gly residues-rich tracts occupy residues 983–1000 (AYGG…GSSR), 1025–1036 (YGQGGSRGGYQG), and 1056–1072 (GYRG…RGYR).

It belongs to the 5'-3' exonuclease family. XRN2/RAT1 subfamily. As to quaternary structure, interacts with rai1; the interaction is direct, stabilizes exr-1 protein structure and may stimulate its exoribonuclease activity. The interaction also stimulates rai1 pyrophosphohydrolase activity, probably by recruiting it to mRNA substrates.

It is found in the nucleus. Its function is as follows. Possesses 5'-&gt;3' exoribonuclease activity. Required for the processing of nuclear mRNA and rRNA precursors. May promote the termination of transcription by RNA polymerase II. Essential for vegetative cell growth and chromosome segregation. The polypeptide is 5'-3' exoribonuclease 2 (exr-1) (Neurospora crassa (strain ATCC 24698 / 74-OR23-1A / CBS 708.71 / DSM 1257 / FGSC 987)).